A 230-amino-acid chain; its full sequence is Large ribosomal subunit protein uL1 (230 aa).

It belongs to the universal ribosomal protein uL1 family. As to quaternary structure, part of the 50S ribosomal subunit.

In terms of biological role, binds directly to 23S rRNA. The L1 stalk is quite mobile in the ribosome, and is involved in E site tRNA release. Its function is as follows. Protein L1 is also a translational repressor protein, it controls the translation of the L11 operon by binding to its mRNA. The sequence is that of Large ribosomal subunit protein uL1 from Rhodopseudomonas palustris (strain BisB18).